Here is a 291-residue protein sequence, read N- to C-terminus: Glycine--tRNA ligase alpha subunit (291 aa).

The protein belongs to the class-II aminoacyl-tRNA synthetase family. Tetramer of two alpha and two beta subunits.

The protein localises to the cytoplasm. The catalysed reaction is tRNA(Gly) + glycine + ATP = glycyl-tRNA(Gly) + AMP + diphosphate. This Microcystis aeruginosa (strain NIES-843 / IAM M-2473) protein is Glycine--tRNA ligase alpha subunit.